A 579-amino-acid polypeptide reads, in one-letter code: Arginine--tRNA ligase (579 aa).

A 'HIGH' region motif is present at residues 123 to 133 (PNLAKEMHVGH).

The protein belongs to the class-I aminoacyl-tRNA synthetase family. Monomer.

The protein localises to the cytoplasm. The enzyme catalyses tRNA(Arg) + L-arginine + ATP = L-arginyl-tRNA(Arg) + AMP + diphosphate. The sequence is that of Arginine--tRNA ligase from Cellvibrio japonicus (strain Ueda107) (Pseudomonas fluorescens subsp. cellulosa).